A 457-amino-acid chain; its full sequence is Phosphomethylpyrimidine synthase (457 aa).

Substrate is bound by residues Asn80, Met109, Tyr139, His175, 195–197 (SRG), 236–239 (DSLR), and Glu275. His279 contributes to the Zn(2+) binding site. Residue Tyr302 participates in substrate binding. Residue His343 coordinates Zn(2+). 3 residues coordinate [4Fe-4S] cluster: Cys423, Cys426, and Cys431.

It belongs to the ThiC family. [4Fe-4S] cluster serves as cofactor.

The enzyme catalyses 5-amino-1-(5-phospho-beta-D-ribosyl)imidazole + S-adenosyl-L-methionine = 4-amino-2-methyl-5-(phosphooxymethyl)pyrimidine + CO + 5'-deoxyadenosine + formate + L-methionine + 3 H(+). It participates in cofactor biosynthesis; thiamine diphosphate biosynthesis. Catalyzes the synthesis of the hydroxymethylpyrimidine phosphate (HMP-P) moiety of thiamine from aminoimidazole ribotide (AIR) in a radical S-adenosyl-L-methionine (SAM)-dependent reaction. The polypeptide is Phosphomethylpyrimidine synthase (Nostoc sp. (strain PCC 7120 / SAG 25.82 / UTEX 2576)).